Here is a 179-residue protein sequence, read N- to C-terminus: MAQFSESADVPDMGRRQFMNLLTFGTVTGVALGALYPVVNYFIPPATGGAGGGTTAKDELGNDVSVTKFLENRNAGDRNLVQGLKGDPTYIVVDSKEAIKDYGINAICTHLGCVVPWNVAENKFKCPCHGSQYDETGKVVRGPAPLSLALAHTNVSDDKIVLTPWTETDFRTGDAPWWS.

A helical transmembrane segment spans residues 21-43 (LLTFGTVTGVALGALYPVVNYFI). Residues 61 to 162 (GNDVSVTKFL…TNVSDDKIVL (102 aa)) form the Rieske domain. Cysteine 108, histidine 110, cysteine 126, and histidine 129 together coordinate [2Fe-2S] cluster. Cysteine 113 and cysteine 128 are oxidised to a cystine.

Belongs to the Rieske iron-sulfur protein family. In terms of assembly, the 4 large subunits of the cytochrome b6-f complex are cytochrome b6, subunit IV (17 kDa polypeptide, PetD), cytochrome f and the Rieske protein, while the 4 small subunits are PetG, PetL, PetM and PetN. The complex functions as a dimer. [2Fe-2S] cluster is required as a cofactor.

It is found in the cellular thylakoid membrane. It catalyses the reaction 2 oxidized [plastocyanin] + a plastoquinol + 2 H(+)(in) = 2 reduced [plastocyanin] + a plastoquinone + 4 H(+)(out). Its function is as follows. Component of the cytochrome b6-f complex, which mediates electron transfer between photosystem II (PSII) and photosystem I (PSI), cyclic electron flow around PSI, and state transitions. This Nostoc punctiforme (strain ATCC 29133 / PCC 73102) protein is Cytochrome b6-f complex iron-sulfur subunit.